The chain runs to 249 residues: 1-(5-phosphoribosyl)-5-[(5-phosphoribosylamino)methylideneamino] imidazole-4-carboxamide isomerase (249 aa).

The Proton acceptor role is filled by aspartate 10. Aspartate 136 functions as the Proton donor in the catalytic mechanism.

It belongs to the HisA/HisF family.

It localises to the cytoplasm. The catalysed reaction is 1-(5-phospho-beta-D-ribosyl)-5-[(5-phospho-beta-D-ribosylamino)methylideneamino]imidazole-4-carboxamide = 5-[(5-phospho-1-deoxy-D-ribulos-1-ylimino)methylamino]-1-(5-phospho-beta-D-ribosyl)imidazole-4-carboxamide. The protein operates within amino-acid biosynthesis; L-histidine biosynthesis; L-histidine from 5-phospho-alpha-D-ribose 1-diphosphate: step 4/9. The polypeptide is 1-(5-phosphoribosyl)-5-[(5-phosphoribosylamino)methylideneamino] imidazole-4-carboxamide isomerase (Symbiobacterium thermophilum (strain DSM 24528 / JCM 14929 / IAM 14863 / T)).